We begin with the raw amino-acid sequence, 695 residues long: Elongation factor G 1 (695 aa).

The region spanning 5–280 (ARYRNIGIFA…AVVDYLPSPT (276 aa)) is the tr-type G domain. GTP-binding positions include 14–21 (AHVDAGKT), 78–82 (DTPGH), and 132–135 (NKLD).

It belongs to the TRAFAC class translation factor GTPase superfamily. Classic translation factor GTPase family. EF-G/EF-2 subfamily.

The protein localises to the cytoplasm. Catalyzes the GTP-dependent ribosomal translocation step during translation elongation. During this step, the ribosome changes from the pre-translocational (PRE) to the post-translocational (POST) state as the newly formed A-site-bound peptidyl-tRNA and P-site-bound deacylated tRNA move to the P and E sites, respectively. Catalyzes the coordinated movement of the two tRNA molecules, the mRNA and conformational changes in the ribosome. This chain is Elongation factor G 1, found in Pseudoalteromonas atlantica (strain T6c / ATCC BAA-1087).